A 105-amino-acid polypeptide reads, in one-letter code: Small ribosomal subunit protein uS10 (105 aa).

It belongs to the universal ribosomal protein uS10 family. Part of the 30S ribosomal subunit.

Involved in the binding of tRNA to the ribosomes. In Francisella tularensis subsp. mediasiatica (strain FSC147), this protein is Small ribosomal subunit protein uS10.